The sequence spans 427 residues: MNTPKSIPSGTCRDTPVLKERGQREVFCGLTGIIWLHRKMQDAFFLVIGSRTCAHLLQSAAGVMIFAEPRFGTAILEETDLAGMADAHEELDREVERLLSRRPDIKQLFLVGSCPSEVIKLDLARAAERLTQVHAPHVRVLNYSGSGIETTFTQGEDACLTSMVPVLPTTDQKELMLVGALPDVVEDQAVSLLSQMGIGPIRVLPAPRTAETPGVGPNTVFACLQPFLGDTAAALTRRGAHHIQAPFPFGEEGTTLWLRAIADEFGVDDDTFDRVTAAPRARARKAIANASEHLNGKSVFFMPDSQLEIPLARFLTRECGMEAIEIGQPFIHKGLVGPDLDLMPAGPTISEGQDVDKQLDRVRAAQPDLTVCGLGLANPLEAEGLTTKWAIELVFTPVHFYEQAGDLAGLFSRPVRRRAVLKLEAAE.

Positions 28, 53, and 114 each coordinate [4Fe-4S] cluster.

It belongs to the BchN/ChlN family. As to quaternary structure, protochlorophyllide reductase is composed of three subunits; BchL, BchN and BchB. Forms a heterotetramer of two BchB and two BchN subunits. It depends on [4Fe-4S] cluster as a cofactor.

The catalysed reaction is chlorophyllide a + oxidized 2[4Fe-4S]-[ferredoxin] + 2 ADP + 2 phosphate = protochlorophyllide a + reduced 2[4Fe-4S]-[ferredoxin] + 2 ATP + 2 H2O. It participates in porphyrin-containing compound metabolism; bacteriochlorophyll biosynthesis (light-independent). Functionally, component of the dark-operative protochlorophyllide reductase (DPOR) that uses Mg-ATP and reduced ferredoxin to reduce ring D of protochlorophyllide (Pchlide) to form chlorophyllide a (Chlide). This reaction is light-independent. The NB-protein (BchN-BchB) is the catalytic component of the complex. In Jannaschia sp. (strain CCS1), this protein is Light-independent protochlorophyllide reductase subunit N.